The primary structure comprises 534 residues: NAD(P)H-quinone oxidoreductase subunit 2 (534 aa).

Helical transmembrane passes span 15 to 35 (ILPE…DLIL), 42 to 62 (WIGY…YFQW), 79 to 99 (LSIV…LMSI), 109 to 129 (LAEF…LSGA), 132 to 152 (LVMI…LTGY), 167 to 187 (LLIG…LYGL), 210 to 230 (LGLV…ISAA), 244 to 264 (PTPV…ALAI), 280 to 300 (FVFT…ALAQ), 306 to 326 (MLAY…IAGT), 334 to 354 (IFYL…IILF), 378 to 398 (LGLS…GFFG), 410 to 432 (GLYW…YIRV), and 466 to 486 (VGLV…NPLF).

The protein belongs to the complex I subunit 2 family. NDH-1 can be composed of about 15 different subunits; different subcomplexes with different compositions have been identified which probably have different functions.

Its subcellular location is the cellular thylakoid membrane. The enzyme catalyses a plastoquinone + NADH + (n+1) H(+)(in) = a plastoquinol + NAD(+) + n H(+)(out). It carries out the reaction a plastoquinone + NADPH + (n+1) H(+)(in) = a plastoquinol + NADP(+) + n H(+)(out). NDH-1 shuttles electrons from an unknown electron donor, via FMN and iron-sulfur (Fe-S) centers, to quinones in the respiratory and/or the photosynthetic chain. The immediate electron acceptor for the enzyme in this species is believed to be plastoquinone. Couples the redox reaction to proton translocation, and thus conserves the redox energy in a proton gradient. Cyanobacterial NDH-1 also plays a role in inorganic carbon-concentration. The polypeptide is NAD(P)H-quinone oxidoreductase subunit 2 (Nostoc punctiforme (strain ATCC 29133 / PCC 73102)).